Reading from the N-terminus, the 156-residue chain is SCP2 sterol-binding domain-containing protein 1 (156 aa).

Residues 44–156 (NFSVFEDISQ…ERIFREWAKI (113 aa)) enclose the SCP2 domain.

The sequence is that of SCP2 sterol-binding domain-containing protein 1 (Scp2d1) from Mus musculus (Mouse).